Consider the following 434-residue polypeptide: Ribosomal protein uS12 methylthiotransferase RimO (434 aa).

The region spanning 2 to 112 is the MTTase N-terminal domain; it reads AKIGFVSLGC…VLEAVQVVLP (111 aa). Cys11, Cys47, Cys76, Cys142, Cys146, and Cys149 together coordinate [4Fe-4S] cluster. Positions 128 to 365 constitute a Radical SAM core domain; the sequence is LTPRHYAYVK…LELQARVSLR (238 aa). The TRAM domain maps to 368-434; that stretch reads QRFVGKTLEV…DTYDLHGVQA (67 aa).

Belongs to the methylthiotransferase family. RimO subfamily. [4Fe-4S] cluster is required as a cofactor.

The protein resides in the cytoplasm. It catalyses the reaction L-aspartate(89)-[ribosomal protein uS12]-hydrogen + (sulfur carrier)-SH + AH2 + 2 S-adenosyl-L-methionine = 3-methylsulfanyl-L-aspartate(89)-[ribosomal protein uS12]-hydrogen + (sulfur carrier)-H + 5'-deoxyadenosine + L-methionine + A + S-adenosyl-L-homocysteine + 2 H(+). Catalyzes the methylthiolation of an aspartic acid residue of ribosomal protein uS12. The chain is Ribosomal protein uS12 methylthiotransferase RimO from Thermus thermophilus (strain ATCC 27634 / DSM 579 / HB8).